The primary structure comprises 183 residues: Shikimate kinase (183 aa).

19–24 (GAGKTT) provides a ligand contact to ATP. Position 23 (T23) interacts with Mg(2+). D41, R65, and G87 together coordinate substrate. Residue R124 participates in ATP binding. A substrate-binding site is contributed by R143.

This sequence belongs to the shikimate kinase family. Monomer. Mg(2+) serves as cofactor.

It localises to the cytoplasm. The enzyme catalyses shikimate + ATP = 3-phosphoshikimate + ADP + H(+). The protein operates within metabolic intermediate biosynthesis; chorismate biosynthesis; chorismate from D-erythrose 4-phosphate and phosphoenolpyruvate: step 5/7. In terms of biological role, catalyzes the specific phosphorylation of the 3-hydroxyl group of shikimic acid using ATP as a cosubstrate. In Thermosynechococcus vestitus (strain NIES-2133 / IAM M-273 / BP-1), this protein is Shikimate kinase.